A 137-amino-acid polypeptide reads, in one-letter code: MPPKAADKKPANKAPATASKAPEKKDAGKKTAASGEKKKRTKARKETYSSYIYKVLKQVHPDTGISNRAMSILNSFVNDIFERVATEASKLAAYNKKSTISSREIQTSVRLILPGELAKHAVSEGTKAVTKYSSSTK.

Residues 1–10 are compositionally biased toward basic and acidic residues; that stretch reads MPPKAADKKP. The segment at 1-45 is disordered; the sequence is MPPKAADKKPANKAPATASKAPEKKDAGKKTAASGEKKKRTKARK. Residues K8 and K9 each carry the N6-acetyllysine; alternate modification. Residues K8 and K9 each participate in a glycyl lysine isopeptide (Lys-Gly) (interchain with G-Cter in SUMO); alternate cross-link. K13 bears the N6-acetyllysine mark. K24 bears the N6-acetyllysine; alternate mark. K24 participates in a covalent cross-link: Glycyl lysine isopeptide (Lys-Gly) (interchain with G-Cter in SUMO); alternate. Residue K25 forms a Glycyl lysine isopeptide (Lys-Gly) (interchain with G-Cter in SUMO) linkage. K131 is covalently cross-linked (Glycyl lysine isopeptide (Lys-Gly) (interchain with G-Cter in ubiquitin)).

Belongs to the histone H2B family. As to quaternary structure, the nucleosome is a histone octamer containing two molecules each of H2A, H2B, H3 and H4 assembled in one H3-H4 heterotetramer and two H2A-H2B heterodimers. The octamer wraps approximately 147 bp of DNA. Monoubiquitinated to form H2BK123ub1. H2BK123ub1 gives a specific tag for epigenetic transcriptional activation and is also prerequisite for H3K4me and H3K79me formation. H2BK123ub1 also modulates the formation of double-strand breaks during meiosis and is a prerequisite for DNA-damage checkpoint activation. Post-translationally, acetylated by GCN5 to form H2BK11ac and H2BK16ac. H2BK16ac can also be formed by ESA1. Acetylation of N-terminal lysines and particularly formation of H2BK11acK16ac has a positive effect on transcription. In terms of processing, sumoylation to form H2BK6su or H2BK7su, and probably also H2BK16su or H2BK17su, occurs preferentially near the telomeres and represses gene transcription.

It localises to the nucleus. Its subcellular location is the chromosome. Functionally, core component of nucleosome. Nucleosomes wrap and compact DNA into chromatin, limiting DNA accessibility to the cellular machineries which require DNA as a template. Histones thereby play a central role in transcription regulation, DNA repair, DNA replication and chromosomal stability. DNA accessibility is regulated via a complex set of post-translational modifications of histones, also called histone code, and nucleosome remodeling. This is Histone H2B (HTB1) from Podospora anserina (Pleurage anserina).